A 245-amino-acid chain; its full sequence is Complement C1q subcomponent subunit C (245 aa).

The signal sequence occupies residues 1-28 (MDVGPSSLPHLGLKLLLLLLLLPLRGQA). In terms of domain architecture, Collagen-like spans 31–112 (GCYGIPGMPG…GIPGEPGEEG (82 aa)). 4-hydroxyproline occurs at positions 36, 39, 42, 45, 54, and 63. Residues 45–113 (PGKDGYDGLP…IPGEPGEEGR (69 aa)) are disordered. Low complexity predominate over residues 54-71 (PGPKGEPGIPAIPGIRGP). Lys-75 bears the 5-hydroxylysine mark. Lys-75 carries O-linked (Gal...) hydroxylysine glycosylation. 5 positions are modified to 4-hydroxyproline: Pro-81, Pro-93, Pro-96, Pro-99, and Pro-105. Residues 90–99 (MGPPGMPGVP) are compositionally biased toward pro residues. The 131-residue stretch at 115–245 (KQKFQSVFTV…VFSGFLLFPD (131 aa)) folds into the C1q domain. The cysteines at positions 179 and 193 are disulfide-linked.

In terms of assembly, core component of the complement C1 complex, a calcium-dependent complex composed of 1 molecule of the C1Q subcomplex, 2 molecules of C1R and 2 molecules of C1S. The C1Q subcomplex is composed 18 subunits: 3 chains of C1QA, C1QB, and C1QC trimerize to form 6 collagen-like triple helices connected to six globular ligand-recognition modules (C1q domain). Post-translationally, O-linked glycans consist of Glc-Gal disaccharides bound to the oxygen atom of post-translationally added hydroxyl groups.

The protein resides in the secreted. It localises to the cell surface. Its activity is regulated as follows. The C1Q subcomplex is inhibited by sulfated molecules, such as triterpenoid sulfates, heparan sulfate, or chondroitin sulfates. Core component of the complement C1 complex, a multiprotein complex that initiates the classical pathway of the complement system, a cascade of proteins that leads to phagocytosis and breakdown of pathogens and signaling that strengthens the adaptive immune system. The classical complement pathway is initiated by the C1Q subcomplex of the C1 complex, which specifically binds IgG or IgM immunoglobulins complexed with antigens, forming antigen-antibody complexes on the surface of pathogens: C1QA, together with C1QB and C1QC, specifically recognizes and binds the Fc regions of IgG or IgM via its C1q domain. Immunoglobulin-binding activates the proenzyme C1R, which cleaves C1S, initiating the proteolytic cascade of the complement system. The C1Q subcomplex is activated by a hexamer of IgG complexed with antigens, while it is activated by a pentameric IgM. The C1Q subcomplex also recognizes and binds phosphatidylserine exposed on the surface of cells undergoing programmed cell death, possibly promoting activation of the complement system. This Homo sapiens (Human) protein is Complement C1q subcomponent subunit C.